The chain runs to 87 residues: MEGRGIRKTLTGRVVSNKMDKTVVVAVETLVRHPLYQRTIRRTKKFKAHDEENACRIGDKVKMMETRPLSKEKRWRVVEILERTKQI.

It belongs to the universal ribosomal protein uS17 family. As to quaternary structure, part of the 30S ribosomal subunit.

Its function is as follows. One of the primary rRNA binding proteins, it binds specifically to the 5'-end of 16S ribosomal RNA. The chain is Small ribosomal subunit protein uS17 from Pelotomaculum thermopropionicum (strain DSM 13744 / JCM 10971 / SI).